Reading from the N-terminus, the 313-residue chain is tRNA-cytidine(32) 2-sulfurtransferase (313 aa).

The short motif at S54 to S59 is the PP-loop motif element. The [4Fe-4S] cluster site is built by C129, C132, and C220.

This sequence belongs to the TtcA family. Homodimer. Mg(2+) serves as cofactor. It depends on [4Fe-4S] cluster as a cofactor.

Its subcellular location is the cytoplasm. The catalysed reaction is cytidine(32) in tRNA + S-sulfanyl-L-cysteinyl-[cysteine desulfurase] + AH2 + ATP = 2-thiocytidine(32) in tRNA + L-cysteinyl-[cysteine desulfurase] + A + AMP + diphosphate + H(+). Its pathway is tRNA modification. Catalyzes the ATP-dependent 2-thiolation of cytidine in position 32 of tRNA, to form 2-thiocytidine (s(2)C32). The sulfur atoms are provided by the cysteine/cysteine desulfurase (IscS) system. This is tRNA-cytidine(32) 2-sulfurtransferase from Methylibium petroleiphilum (strain ATCC BAA-1232 / LMG 22953 / PM1).